Consider the following 294-residue polypeptide: Universal stress protein MSMEG_3950/MSMEI_3859 (294 aa).

Gly-13 provides a ligand contact to ATP. Lys-109 participates in a covalent cross-link: Isoglutamyl lysine isopeptide (Lys-Gln) (interchain with Q-Cter in protein Pup). ATP-binding positions include 117–123 (GNRGMGA), 131–132 (ST), Gly-164, Asp-197, 261–267 (GSHGRGG), and 275–277 (SVS).

Belongs to the universal stress protein A family.

The polypeptide is Universal stress protein MSMEG_3950/MSMEI_3859 (Mycolicibacterium smegmatis (strain ATCC 700084 / mc(2)155) (Mycobacterium smegmatis)).